Consider the following 1282-residue polypeptide: ATP-dependent helicase/nuclease subunit A (1282 aa).

Residues 10–481 (SKWTDSQRQV…IELQENFRSS (472 aa)) form the UvrD-like helicase ATP-binding domain. 31–38 (AGAGAGKT) lines the ATP pocket. The region spanning 516-820 (KPRELYLNED…RLMSIHKSKG (305 aa)) is the UvrD-like helicase C-terminal domain.

It belongs to the helicase family. AddA subfamily. Heterodimer of AddA and AddB/RexB. Requires Mg(2+) as cofactor.

It catalyses the reaction Couples ATP hydrolysis with the unwinding of duplex DNA by translocating in the 3'-5' direction.. It carries out the reaction ATP + H2O = ADP + phosphate + H(+). In terms of biological role, the heterodimer acts as both an ATP-dependent DNA helicase and an ATP-dependent, dual-direction single-stranded exonuclease. Recognizes the chi site generating a DNA molecule suitable for the initiation of homologous recombination. The AddA nuclease domain is required for chi fragment generation; this subunit has the helicase and 3' -&gt; 5' nuclease activities. This is ATP-dependent helicase/nuclease subunit A from Natranaerobius thermophilus (strain ATCC BAA-1301 / DSM 18059 / JW/NM-WN-LF).